A 197-amino-acid chain; its full sequence is Probable molybdenum cofactor guanylyltransferase (197 aa).

Residues 12–14 (LAG), lysine 24, aspartate 71, and aspartate 103 contribute to the GTP site. Aspartate 103 contacts Mg(2+).

The protein belongs to the MobA family. The cofactor is Mg(2+).

Its subcellular location is the cytoplasm. It catalyses the reaction Mo-molybdopterin + GTP + H(+) = Mo-molybdopterin guanine dinucleotide + diphosphate. In terms of biological role, transfers a GMP moiety from GTP to Mo-molybdopterin (Mo-MPT) cofactor (Moco or molybdenum cofactor) to form Mo-molybdopterin guanine dinucleotide (Mo-MGD) cofactor. This chain is Probable molybdenum cofactor guanylyltransferase, found in Mycobacterium avium (strain 104).